The chain runs to 393 residues: NAD(P)H-quinone oxidoreductase subunit H, chloroplastic (393 aa).

This sequence belongs to the complex I 49 kDa subunit family. In terms of assembly, NDH is composed of at least 16 different subunits, 5 of which are encoded in the nucleus.

The protein resides in the plastid. It localises to the chloroplast thylakoid membrane. The enzyme catalyses a plastoquinone + NADH + (n+1) H(+)(in) = a plastoquinol + NAD(+) + n H(+)(out). It catalyses the reaction a plastoquinone + NADPH + (n+1) H(+)(in) = a plastoquinol + NADP(+) + n H(+)(out). In terms of biological role, NDH shuttles electrons from NAD(P)H:plastoquinone, via FMN and iron-sulfur (Fe-S) centers, to quinones in the photosynthetic chain and possibly in a chloroplast respiratory chain. The immediate electron acceptor for the enzyme in this species is believed to be plastoquinone. Couples the redox reaction to proton translocation, and thus conserves the redox energy in a proton gradient. The protein is NAD(P)H-quinone oxidoreductase subunit H, chloroplastic of Crucihimalaya wallichii (Rock-cress).